Here is a 427-residue protein sequence, read N- to C-terminus: Peptidase B (427 aa).

Mn(2+) contacts are provided by K195 and D200. Residue K207 is part of the active site. D218, D277, and E279 together coordinate Mn(2+). R281 is an active-site residue.

The protein belongs to the peptidase M17 family. In terms of assembly, homohexamer. Requires Mn(2+) as cofactor.

Its subcellular location is the cytoplasm. It catalyses the reaction Release of an N-terminal amino acid, Xaa, from a peptide or arylamide. Xaa is preferably Glu or Asp but may be other amino acids, including Leu, Met, His, Cys and Gln.. Probably plays an important role in intracellular peptide degradation. The chain is Peptidase B from Escherichia coli O157:H7.